A 973-amino-acid chain; its full sequence is Peptidyl-glycine alpha-amidating monooxygenase (973 aa).

An N-terminal signal peptide occupies residues 1-20 (MAGRVPSLLVLLVFPSSCLA). The interval 1 to 494 (MAGRVPSLLV…EGTWEPEHTG (494 aa)) is peptidylglycine alpha-hydroxylating monooxygenase. The propeptide occupies 21–30 (FRSPLSVFKR). The Intragranular portion of the chain corresponds to 31–863 (FKETTRPFSN…QKLIKEPGSG (833 aa)). Disulfide bonds link cysteine 42–cysteine 181, cysteine 76–cysteine 121, cysteine 109–cysteine 126, cysteine 222–cysteine 329, and cysteine 288–cysteine 310. Cu(2+) contacts are provided by histidine 102 and histidine 103. Histidine 167, histidine 237, histidine 239, and methionine 309 together coordinate Cu(2+). Residues 495–817 (DFHMEEALDW…LTEKLEHRSV (323 aa)) form a peptidyl-alpha-hydroxyglycine alpha-amidating lyase region. NHL repeat units lie at residues 498 to 541 (MEEA…NSFD), 567 to 608 (AAVL…LDPN), 617 to 662 (LGRS…FSPS), and 670 to 714 (GEES…FKTD). Ca(2+) is bound at residue valine 517. Arginine 530 provides a ligand contact to a protein. Histidine 582 serves as a coordination point for Zn(2+). Leucine 584 contacts Ca(2+). Cysteine 631 and cysteine 652 are joined by a disulfide. Position 651 (tyrosine 651) interacts with a protein. Histidine 687 is a Zn(2+) binding site. Cysteine 699 and cysteine 710 are joined by a disulfide. Arginine 703 provides a ligand contact to a protein. The N-linked (GlcNAc...) asparagine glycan is linked to asparagine 762. Residues 766-809 (GEIIDIFKPVRKHFDMPHDIVASEDGTVYIGDAHTNTVWKFTLT) form an NHL 5 repeat. Histidine 783 is a binding site for Zn(2+). Aspartate 784 is a binding site for Ca(2+). Residues 864 to 887 (VPVVLITTLLVIPVVVLLAIAIFI) traverse the membrane as a helical segment. A sulfotyrosine mark is found at isoleucine 875 and arginine 893. At 888 to 973 (RWKKSRAFGD…PLPALAPSSS (86 aa)) the chain is on the cytoplasmic side. Phosphoserine occurs at positions 918, 929, and 942. Residues 925-942 (NFFASRKGYSRKGFDRLS) are interaction with RASSF9. Residues 937-973 (GFDRLSTEGSDQEKEDDGSESEEEYSAPLPALAPSSS) are disordered. Threonine 943 bears the Phosphothreonine mark. The residue at position 946 (serine 946) is a Phosphoserine; by UHMK1; in vitro. The segment covering 949–961 (EKEDDGSESEEEY) has biased composition (acidic residues). Serine 957 bears the Phosphoserine mark. A compositionally biased stretch (low complexity) spans 962–973 (SAPLPALAPSSS).

It in the C-terminal section; belongs to the peptidyl-alpha-hydroxyglycine alpha-amidating lyase family. In the N-terminal section; belongs to the copper type II ascorbate-dependent monooxygenase family. As to quaternary structure, monomer. Interacts with RASSF9. Zn(2+) is required as a cofactor. It depends on Cu(2+) as a cofactor.

It is found in the cytoplasmic vesicle. Its subcellular location is the secretory vesicle membrane. The protein resides in the membrane. It localises to the secreted. The enzyme catalyses a [peptide]-C-terminal glycine + 2 L-ascorbate + O2 = a [peptide]-C-terminal (2S)-2-hydroxyglycine + 2 monodehydro-L-ascorbate radical + H2O. It catalyses the reaction a [peptide]-C-terminal (2S)-2-hydroxyglycine = a [peptide]-C-terminal amide + glyoxylate. It carries out the reaction N-dodecanoylglycine + 2 L-ascorbate + O2 = N-dodecanoyl-(2S)-hydroxyglycine + 2 monodehydro-L-ascorbate radical + H2O. The catalysed reaction is N-dodecanoyl-(2S)-hydroxyglycine = dodecanamide + glyoxylate. The enzyme catalyses N-(9Z,12Z,15Z)-octadecatrienoylglycine + 2 L-ascorbate + O2 = N-(9Z,12Z,15Z)-octadecatrienoyl-(2S)-hydroxyglycine + 2 monodehydro-L-ascorbate radical + H2O. It catalyses the reaction N-(9Z,12Z,15Z)-octadecatrienoyl-(2S)-hydroxyglycine = (9Z,12Z,15Z)-octadecatrienamide + glyoxylate. It carries out the reaction N-(9Z-octadecenoyl)glycine + 2 L-ascorbate + O2 = N-(9Z-octadecenoyl)-(2S)-hydroxyglycine + 2 monodehydro-L-ascorbate radical + H2O. The catalysed reaction is N-(9Z-octadecenoyl)-(2S)-hydroxyglycine = (9Z)-octadecenamide + glyoxylate. The enzyme catalyses N-tetradecanoylglycine + 2 L-ascorbate + O2 = N-tetradecanoyl-(2S)-hydroxyglycine + 2 monodehydro-L-ascorbate radical + H2O. It catalyses the reaction N-tetradecanoyl-(2S)-hydroxyglycine = tetradecamide + glyoxylate. It carries out the reaction N-decanoylglycine + 2 L-ascorbate + O2 = N-decanoyl-(2S)-hydroxyglycine + 2 monodehydro-L-ascorbate radical + H2O. The catalysed reaction is N-decanoyl-(2S)-hydroxyglycine = decanamide + glyoxylate. The enzyme catalyses N-octanoylglycine + 2 L-ascorbate + O2 = N-octanoyl-(2S)-hydroxyglycine + 2 monodehydro-L-ascorbate radical + H2O. It catalyses the reaction N-octanoyl-(2S)-hydroxyglycine = octanamide + glyoxylate. PAM activity is inhibited by EDTA, phenylglyoxal and diethyl pyrocarbonate. PAL activity is stimulated by cadmium and inhibited by mercury. Functionally, bifunctional enzyme that catalyzes amidation of the C-terminus of proteins. Alpha-amidation is present at the C-terminus of many endocrine hormones and neuropeptides and is required for their activity. C-terminal amidation also takes place in response to protein fragmentation triggered by oxidative stress, promoting degradation of amidated protein fragments by the proteasome. Alpha-amidation involves two sequential reactions, both of which are catalyzed by separate catalytic domains of the enzyme. The first step, catalyzed by peptidyl alpha-hydroxylating monooxygenase (PHM) domain, is the copper-, ascorbate-, and O2- dependent stereospecific hydroxylation (with S stereochemistry) at the alpha-carbon (C-alpha) of the C-terminal glycine of the peptidylglycine substrate. The second step, catalyzed by the peptidylglycine amidoglycolate lyase (PAL) domain, is the zinc-dependent cleavage of the N-C-alpha bond, producing the alpha-amidated peptide and glyoxylate. Similarly, catalyzes the two-step conversion of an N-fatty acylglycine to a primary fatty acid amide and glyoxylate. This is Peptidyl-glycine alpha-amidating monooxygenase from Homo sapiens (Human).